Reading from the N-terminus, the 164-residue chain is Ribosome-binding factor A (164 aa).

Residues 123-164 (ARDLGVPPSGEDDGDDEADDEDDDGGEEGPGAAAPPPADEGR) form a disordered region. Residues 132–149 (GEDDGDDEADDEDDDGGE) are compositionally biased toward acidic residues. Positions 155–164 (AAPPPADEGR) are enriched in pro residues.

This sequence belongs to the RbfA family. As to quaternary structure, monomer. Binds 30S ribosomal subunits, but not 50S ribosomal subunits or 70S ribosomes.

It localises to the cytoplasm. In terms of biological role, one of several proteins that assist in the late maturation steps of the functional core of the 30S ribosomal subunit. Associates with free 30S ribosomal subunits (but not with 30S subunits that are part of 70S ribosomes or polysomes). Required for efficient processing of 16S rRNA. May interact with the 5'-terminal helix region of 16S rRNA. This chain is Ribosome-binding factor A, found in Rhodospirillum rubrum (strain ATCC 11170 / ATH 1.1.1 / DSM 467 / LMG 4362 / NCIMB 8255 / S1).